Reading from the N-terminus, the 434-residue chain is Glutamate-1-semialdehyde 2,1-aminomutase (434 aa).

At Lys-273 the chain carries N6-(pyridoxal phosphate)lysine.

It belongs to the class-III pyridoxal-phosphate-dependent aminotransferase family. HemL subfamily. As to quaternary structure, homodimer. It depends on pyridoxal 5'-phosphate as a cofactor.

The protein localises to the cytoplasm. The enzyme catalyses (S)-4-amino-5-oxopentanoate = 5-aminolevulinate. It participates in porphyrin-containing compound metabolism; protoporphyrin-IX biosynthesis; 5-aminolevulinate from L-glutamyl-tRNA(Glu): step 2/2. The polypeptide is Glutamate-1-semialdehyde 2,1-aminomutase (Polynucleobacter asymbioticus (strain DSM 18221 / CIP 109841 / QLW-P1DMWA-1) (Polynucleobacter necessarius subsp. asymbioticus)).